We begin with the raw amino-acid sequence, 125 residues long: Holo-[acyl-carrier-protein] synthase (125 aa).

Residues aspartate 8 and glutamate 57 each coordinate Mg(2+).

This sequence belongs to the P-Pant transferase superfamily. AcpS family. Mg(2+) serves as cofactor.

The protein resides in the cytoplasm. The enzyme catalyses apo-[ACP] + CoA = holo-[ACP] + adenosine 3',5'-bisphosphate + H(+). Its function is as follows. Transfers the 4'-phosphopantetheine moiety from coenzyme A to a Ser of acyl-carrier-protein. This Geotalea daltonii (strain DSM 22248 / JCM 15807 / FRC-32) (Geobacter daltonii) protein is Holo-[acyl-carrier-protein] synthase.